Here is a 226-residue protein sequence, read N- to C-terminus: Gap junction beta-2 protein (226 aa).

An intramembrane segment occupies 2 to 13 (DWSALQTILGGV). Over 14 to 20 (NKHSTSI) the chain is Cytoplasmic. The chain crosses the membrane as a helical span at residues 21–40 (GKIWLTVLFIFRIMILVVAA). Over 41-73 (KEVWGDEQADFVCNTLQPGCKNVCYDHYFPISH) the chain is Extracellular. 3 residues coordinate Ca(2+): Glu42, Gly45, and Glu47. Disulfide bonds link Cys53–Cys180, Cys60–Cys174, and Cys64–Cys169. Residues 74-94 (IRLWALQLIFVSTPALLVAMH) traverse the membrane as a helical segment. Residues 95-135 (VAYYRHEKKRKFIRGEIKTEFKDIEEIKNQKVRIEGSLWWT) lie on the Cytoplasmic side of the membrane. The chain crosses the membrane as a helical span at residues 136–156 (YTGSIFFRVIFEAAFMYVFYV). Residues 157 to 189 (MYDGFAMQRLVKCNAWPCPNTVDCFVSRPTEKT) lie on the Extracellular side of the membrane. Residues 190 to 210 (VFTVFMIAVSGICILLNVTEL) traverse the membrane as a helical segment. The Cytoplasmic portion of the chain corresponds to 211-226 (CYLLIRFCSGKSKKPV).

It belongs to the connexin family. Beta-type (group I) subfamily. As to quaternary structure, a hemichannel or connexon is composed of a hexamer of connexins. A functional gap junction is formed by the apposition of two hemichannels. Forms heteromeric channels with GJB4. Interacts with CNST.

Its subcellular location is the cell membrane. It localises to the cell junction. It is found in the gap junction. Structural component of gap junctions. Gap junctions are dodecameric channels that connect the cytoplasm of adjoining cells. They are formed by the docking of two hexameric hemichannels, one from each cell membrane. Small molecules and ions diffuse from one cell to a neighboring cell via the central pore. This chain is Gap junction beta-2 protein (GJB2), found in Ovis aries (Sheep).